A 513-amino-acid polypeptide reads, in one-letter code: uncharacterized protein (513 aa).

This sequence belongs to the NodU/CmcH family.

This is an uncharacterized protein from Methanocaldococcus jannaschii (strain ATCC 43067 / DSM 2661 / JAL-1 / JCM 10045 / NBRC 100440) (Methanococcus jannaschii).